The primary structure comprises 587 residues: Branchpoint-bridging protein (587 aa).

A compositionally biased stretch (polar residues) spans 1–16 (MLNSRSVGSTGSNNTP). Disordered regions lie at residues 1 to 64 (MLNS…DGRG) and 121 to 142 (GDVV…DNHG). The segment covering 44-64 (DSYKSNSRMDHRPDGYHDGRG) has biased composition (basic and acidic residues). 2 positions are modified to phosphoserine: Ser131 and Ser133. In terms of domain architecture, KH spans 191 to 271 (YVPVKDYPEI…DKINHAIKLI (81 aa)). 2 CCHC-type zinc fingers span residues 309–326 (QVCQ…DCPE) and 334–351 (IVCR…DCPV). Disordered stretches follow at residues 375-490 (GGGS…PGTS) and 551-587 (IPGA…YSNR). Residues 379–399 (AISNGNGEPQKSIEFSESGAA) are compositionally biased toward polar residues. Over residues 410 to 454 (AAASTSVSSSTSSPAPWAKPASSAAPSNPAPWQQPAAPQSAPALS) the composition is skewed to low complexity. Polar residues-rich tracts occupy residues 465 to 483 (QPTQ…SQNA) and 563 to 573 (SYNTSESSNLN).

The protein belongs to the BBP/SF1 family. U2AF large subunit (u2af59), U2AF small subunit (u2af23) and bpb1 interact to form a complex required for complex A formation.

Its subcellular location is the cytoplasm. It localises to the nucleus. In terms of biological role, necessary for the splicing of pre-mRNA. The BPB1(SF1)-u2af59-u2af23 complex has a role in the recognition of the branch site (5'-UACUAAC-3'), the pyrimidine tract and the 3'-splice site at the 3'-end of introns. In Schizosaccharomyces pombe (strain 972 / ATCC 24843) (Fission yeast), this protein is Branchpoint-bridging protein (bpb1).